The chain runs to 236 residues: Purine nucleoside phosphorylase DeoD-type 2 (236 aa).

Histidine 5 provides a ligand contact to a purine D-ribonucleoside. Phosphate is bound by residues glycine 21, arginine 25, arginine 44, and 88 to 91 (RVGT). A purine D-ribonucleoside-binding positions include 180-182 (EME) and 204-205 (SD). Catalysis depends on aspartate 205, which acts as the Proton donor.

The protein belongs to the PNP/UDP phosphorylase family. As to quaternary structure, homohexamer; trimer of homodimers.

It catalyses the reaction a purine D-ribonucleoside + phosphate = a purine nucleobase + alpha-D-ribose 1-phosphate. It carries out the reaction a purine 2'-deoxy-D-ribonucleoside + phosphate = a purine nucleobase + 2-deoxy-alpha-D-ribose 1-phosphate. Functionally, catalyzes the reversible phosphorolytic breakdown of the N-glycosidic bond in the beta-(deoxy)ribonucleoside molecules, with the formation of the corresponding free purine bases and pentose-1-phosphate. This Shewanella oneidensis (strain ATCC 700550 / JCM 31522 / CIP 106686 / LMG 19005 / NCIMB 14063 / MR-1) protein is Purine nucleoside phosphorylase DeoD-type 2.